The sequence spans 245 residues: 2,3-bisphosphoglycerate-dependent phosphoglycerate mutase (245 aa).

Residues 8–15 (RHGQSLWN), 21–22 (TG), Arg60, 87–90 (ERHY), Lys98, 114–115 (RR), and 183–184 (GN) contribute to the substrate site. The Tele-phosphohistidine intermediate role is filled by His9. The active-site Proton donor/acceptor is Glu87.

This sequence belongs to the phosphoglycerate mutase family. BPG-dependent PGAM subfamily.

The catalysed reaction is (2R)-2-phosphoglycerate = (2R)-3-phosphoglycerate. Its pathway is carbohydrate degradation; glycolysis; pyruvate from D-glyceraldehyde 3-phosphate: step 3/5. Catalyzes the interconversion of 2-phosphoglycerate and 3-phosphoglycerate. This is 2,3-bisphosphoglycerate-dependent phosphoglycerate mutase from Bacillus mycoides (strain KBAB4) (Bacillus weihenstephanensis).